The sequence spans 602 residues: Leucine-rich repeat-containing protein 40 (602 aa).

The segment at 1–20 (MSRLKRIAGQDPRAGFKAAG) is disordered. Position 71 is a phosphoserine (S71). LRR repeat units follow at residues 83-104 (DLTK…LRLL), 106-127 (ALTV…MREL), 129-150 (NLQK…ITNL), 152-173 (NLKC…FEQL), 175-196 (NLED…FSSL), 198-219 (SLVR…INRM), 221-242 (RLKH…LAGM), 244-265 (SLEL…PSCS), 266-286 (LLKE…EHLK), 290-311 (SILV…IILL), 313-335 (SLER…GNLH), 336-356 (LKFL…IINK), 400-421 (TLKI…VFNA), 426-447 (IITS…MVEL), 450-471 (MVSD…LCML), 473-494 (KLTF…MESL), 496-517 (RLQT…LYRI), 519-540 (TLET…KMKM), 543-564 (NLTT…LGNC), and 566-586 (NLRT…AILI).

The polypeptide is Leucine-rich repeat-containing protein 40 (LRRC40) (Macaca fascicularis (Crab-eating macaque)).